The primary structure comprises 406 residues: Homocysteine-responsive endoplasmic reticulum-resident ubiquitin-like domain member 2 protein (406 aa).

A Ubiquitin-like domain is found at 10–89; sequence VTLIIKAPNQ…HMVHLVCTSR (80 aa). Residues 86 to 154 form a disordered region; that stretch reads CTSRTPPSSP…TLPQAQTDQA (69 aa). Low complexity-rich tracts occupy residues 87 to 98 and 106 to 126; these read TSRTPPSSPKSS and ALASSSNSSSDHSGSTTPSSG. The span at 127 to 154 shows a compositional bias: polar residues; that stretch reads QETLSLAVGSSSEGLRQRTLPQAQTDQA. Residues 302 to 322 form a helical membrane-spanning segment; sequence FIMVMGAMLLVYLHQAGWFPF.

The protein localises to the membrane. Could be involved in the unfolded protein response (UPR) pathway. The sequence is that of Homocysteine-responsive endoplasmic reticulum-resident ubiquitin-like domain member 2 protein (HERPUD2) from Homo sapiens (Human).